Here is a 462-residue protein sequence, read N- to C-terminus: MPADPEVHFEGTIVAIRGGVVDVAFAEAVPRIHALIVAGGVAMEVASIVGEGVVRCIALGPTRGLGLGTRATGTRAGIEVPVGEGVLGRMLDMFGAPLDGAPPPEATARRPIHRPPPVLSDRVLRAEVLETGIKAIDLLSPIERGGKTGLFGGAGVGKTVLLSELIHNTVEHHHGVSLFCGIGERSREAEELWREMGEAGVRERMVMLFGQMNEAPGVRFLVGHSALTMAEYFRDDREQDVLLLIDNIFRFVQAGSEVSGLLGRMPSRVGYQPTLATELAALQERIASTRRGAITSIQAVYVPADDFTDPAAAHIFSHLSASVVLSRKRASEGLYPAVDPLASTSVMLTPEVVGQRHYDIARGVRRTLAEYEDLRDIIAMLGIEELSAHDRAVVARARRLERFLTQPFFTVGAAAGTLGKLVPIAETLDGCEEILSQTSFERPESAYYMIGALSDLRKEAAA.

152–159 is a binding site for ATP; that stretch reads GGAGVGKT.

This sequence belongs to the ATPase alpha/beta chains family. F-type ATPases have 2 components, CF(1) - the catalytic core - and CF(0) - the membrane proton channel. CF(1) has five subunits: alpha(3), beta(3), gamma(1), delta(1), epsilon(1). CF(0) has four main subunits: a(1), b(1), b'(1) and c(9-12).

Its subcellular location is the cell inner membrane. The enzyme catalyses ATP + H2O + 4 H(+)(in) = ADP + phosphate + 5 H(+)(out). In terms of biological role, produces ATP from ADP in the presence of a proton gradient across the membrane. The catalytic sites are hosted primarily by the beta subunits. The polypeptide is ATP synthase subunit beta 1 (Dinoroseobacter shibae (strain DSM 16493 / NCIMB 14021 / DFL 12)).